A 618-amino-acid polypeptide reads, in one-letter code: MESNLSAKGIFQHASANASGELFQEPVTEDLEKVMQSKGLYSMEELCSIIQEAYAPRVSVLCSRDADEFAMRKGYPKGFWELLYPFGDRIRGKVNRRGMNGEMLTLENLNLHFVPIDALESHLSEASFPSLRSVLCERYPGLVSPEPPSDYSFGVHYKNVERWAWTLAHEGNYQMPLPVYVRQLLTGIPITPFETFSHPVAHLVVVTSHNPSPFESLRSLINSIPYLSLPAFVFNDINYLFVYVHDEDQHDLELSMAIFDTMKQTFGDCGYFLRLHSQKATLDYEHTVPFPTSSWLSAEERLHLLSNTDTEIRLLFESDNESLRRLSSHIAFNGIVSYLDKCVRAWDDQYASPRRGITGKLLFASRKYLSSSNASTNSNYFPSSNAYRPFSPEAYLRKLADYSFMLRDYSHANQIYEIASRQYENDGACLYSAASLEMIVITEHILHLKMPYMSLTNTLRINEYMQSAMLNYLNKSFNSYYHAARCFLLLGQFLSCLPAPKVDDAANWNAGLLYSKRLGPVGRAMIFQQTHTLFKSLSYLKTESTDPFSNKRTRKAALWCVLTADAWLRCRIPFRAKPFVEEAKLFYGKIDWKDLKECVAALDEVEVSKQPASNIPSS.

It belongs to the TRS85 family. As to quaternary structure, part of the multisubunit TRAPP (transport protein particle) complexes I and II.

The protein localises to the golgi apparatus. It localises to the cis-Golgi network. In terms of biological role, component of the TRAPP I and TRAPP II complexes. TRAPP I plays a key role in the late stages of endoplasmic reticulum to Golgi traffic. TRAPP II seems to play a role in intra-Golgi transport. Has a role late in meiosis following DNA replication. This chain is Transport protein particle subunit trs85-2 (trs85-2), found in Schizosaccharomyces pombe (strain 972 / ATCC 24843) (Fission yeast).